A 424-amino-acid polypeptide reads, in one-letter code: Na(+), Li(+), K(+)/H(+) antiporter (424 aa).

12 consecutive transmembrane segments (helical) span residues 15–35 (VGEF…AIYF), 42–62 (GLAG…NLFG), 74–94 (MLVS…LANS), 105–125 (VAFT…QAMI), 141–161 (FYTT…VLFF), 165–185 (FELL…LRFY), 227–247 (LLFV…DLVI), 274–294 (TSFG…TVVI), 305–325 (WVFF…PMTS), 327–347 (FWIF…VVGL), 367–389 (AASL…TAWF), and 393–415 (WTFI…MFHL).

It belongs to the major facilitator superfamily.

It is found in the cell membrane. Its activity is regulated as follows. Norfloxacin transport is inhibited by CCCP. Exhibits dual functions as a Na(+)(Li(+)/K(+))/H(+) antiporter and a multidrug efflux pump. Catalyzes the efflux of Na(+), Li(+) and K(+) in exchange for external protons. Shows a preference for Na(+), followed by K(+) and Li(+). Can also function as a multidrug efflux pump. Transports ethidium bromide and norfloxacin. The polypeptide is Na(+), Li(+), K(+)/H(+) antiporter (Planococcus maritimus).